Reading from the N-terminus, the 1076-residue chain is Atos homolog protein A (1076 aa).

The interval 24-32 is transactivation domain 1 (TAD1); that stretch reads ALLITEGRT. Disordered stretches follow at residues 700–721 and 739–765; these read ESMSSNKDSKRPKTCEQNTQLN and SDQLKNEQDKQEDPTNEKSQNYSQRRS. A compositionally biased stretch (basic and acidic residues) spans 739-754; that stretch reads SDQLKNEQDKQEDPTN. The segment at 878–935 is required for macropage invasion; that stretch reads LLGNFEESVLNYRFDPLGIVDGFTAEVGASGAFCPTHLTLPVEVSFYSVSDDNAPSPY. Residues 962–970 are transactivation domain 2 (TAD2); the sequence is FNPNKTVVK.

It belongs to the ATOS family.

The protein localises to the nucleus. Transcription regulator that syncronizes transcriptional and translational programs to promote macrophage invasion of tissues. The polypeptide is Atos homolog protein A (Homo sapiens (Human)).